The sequence spans 103 residues: UPF0102 protein aq_041 (103 aa).

It belongs to the UPF0102 family.

The polypeptide is UPF0102 protein aq_041 (Aquifex aeolicus (strain VF5)).